The sequence spans 711 residues: Acyl-CoA dehydrogenase FadE34 (711 aa).

The protein belongs to the acyl-CoA dehydrogenase family. As to quaternary structure, homodimer. Requires FAD as cofactor.

It catalyses the reaction 3-oxochol-4-en-24-oyl-CoA + A = (22E)-3-oxochola-4,22-dien-24-oyl-CoA + AH2. The enzyme catalyses 3beta-hydroxy-chol-5-ene-24-oyl-CoA + A = 3beta-hydroxy-chol-5,22-dien-24-oyl-CoA + AH2. It functions in the pathway steroid metabolism; cholesterol degradation. Its function is as follows. Involved in the second cycle of side chain dehydrogenation in the beta-oxidation of cholesterol catabolism. It contributes partly to the virulence by increasing the efficiency of beta-oxidation. Catalyzes the dehydrogenation of the five-carbon steroid side chain of 3-oxo-chol-4-en-24-oyl-CoA (3-OCO-CoA) to yield 3-oxochol-4,22-dien-24-oyl-CoA. Can also use 3beta-hydroxy-chol-5-ene-24-oyl-CoA, and shows weak activity with cholyl-CoA and deoxycholyl-CoA. The chain is Acyl-CoA dehydrogenase FadE34 (fadE34) from Mycobacterium tuberculosis (strain ATCC 25618 / H37Rv).